The primary structure comprises 215 residues: Thymidylate kinase (215 aa).

Residue 11-18 (GIDGAGKS) participates in ATP binding.

The protein belongs to the thymidylate kinase family.

The enzyme catalyses dTMP + ATP = dTDP + ADP. Functionally, phosphorylation of dTMP to form dTDP in both de novo and salvage pathways of dTTP synthesis. The chain is Thymidylate kinase from Nitrosomonas eutropha (strain DSM 101675 / C91 / Nm57).